Here is an 85-residue protein sequence, read N- to C-terminus: Toxin CsE8 (85 aa).

Positions 1–19 (MNSLLMITACLVLFGTVWS) are cleaved as a signal peptide. The LCN-type CS-alpha/beta domain occupies 20 to 83 (EKGYLVHEDT…TWPLIGKLCG (64 aa)). Intrachain disulfides connect C31–C82, C35–C58, C44–C63, and C48–C65. C82 is subject to Cysteine amide.

Belongs to the long (4 C-C) scorpion toxin superfamily. Sodium channel inhibitor family. Beta subfamily. As to expression, expressed by the venom gland.

It is found in the secreted. Beta toxins bind voltage-independently at site-4 of sodium channels (Nav) and shift the voltage of activation toward more negative potentials thereby affecting sodium channel activation and promoting spontaneous and repetitive firing. In Centruroides sculpturatus (Arizona bark scorpion), this protein is Toxin CsE8.